Here is a 535-residue protein sequence, read N- to C-terminus: Glucose-6-phosphate isomerase (535 aa).

Glu359 acts as the Proton donor in catalysis. Catalysis depends on residues His390 and Lys505.

Belongs to the GPI family.

Its subcellular location is the cytoplasm. The catalysed reaction is alpha-D-glucose 6-phosphate = beta-D-fructose 6-phosphate. It functions in the pathway carbohydrate biosynthesis; gluconeogenesis. Its pathway is carbohydrate degradation; glycolysis; D-glyceraldehyde 3-phosphate and glycerone phosphate from D-glucose: step 2/4. Its function is as follows. Catalyzes the reversible isomerization of glucose-6-phosphate to fructose-6-phosphate. This chain is Glucose-6-phosphate isomerase, found in Treponema pallidum (strain Nichols).